The chain runs to 628 residues: Patulin synthase (628 aa).

Residues 1–20 (MRPIPSILGALGAFATLSAA) form the signal peptide. The N-linked (GlcNAc...) asparagine glycan is linked to Asn-48. FAD contacts are provided by residues 60–61 (TA) and 81–82 (EA). An N-linked (GlcNAc...) asparagine glycan is attached at Asn-92. 147–150 (NYMA) contacts FAD. Asn-197, Asn-260, Asn-386, Asn-429, and Asn-486 each carry an N-linked (GlcNAc...) asparagine glycan. Catalysis depends on His-564, which acts as the Proton acceptor. FAD is bound by residues Ala-598 and 609–610 (PQ).

Belongs to the GMC oxidoreductase family. In terms of assembly, homodimer. It depends on FAD as a cofactor.

The protein localises to the cytoplasm. It is found in the cell cortex. Its subcellular location is the vacuole. The protein resides in the secreted. It localises to the cell wall. It catalyses the reaction (E)-ascladiol + A = patulin + AH2. It participates in mycotoxin biosynthesis; patulin biosynthesis. Functionally, patulin synthase; part of the gene cluster that mediates the biosynthesis of patulin, an acetate-derived tetraketide mycotoxin produced by several fungal species that shows antimicrobial properties against several bacteria. PatE catalyzes the last step of the pathway which is the conversion of E-ascladiol to patulin. The pathway begins with the synthesis of 6-methylsalicylic acid by the polyketide synthase (PKS) patK via condensation of acetate and malonate units. The 6-methylsalicylic acid decarboxylase patG then catalyzes the decarboxylation of 6-methylsalicylic acid to yield m-cresol (also known as 3-methylphenol). These first reactions occur in the cytosol. The intermediate m-cresol is then transported into the endoplasmic reticulum where the cytochrome P450 monooxygenase patH converts it to m-hydroxybenzyl alcohol, which is further converted to gentisyl alcohol by the cytochrome P450 monooxygenase patI. The oxidoreductases patJ and patO further convert gentisyl alcohol to isoepoxydon in the vacuole. PatN catalyzes then the transformation of isoepoxydon into phyllostine. The cluster protein patF is responsible for the conversion from phyllostine to neopatulin whereas the alcohol dehydrogenase patD converts neopatulin to E-ascladiol. The steps between isoepoxydon and E-ascladiol occur in the cytosol, and E-ascladiol is probably secreted to the extracellular space by one of the cluster-specific transporters patC or patM. Finally, the secreted patulin synthase patE catalyzes the conversion of E-ascladiol to patulin. This is Patulin synthase from Aspergillus clavatus (strain ATCC 1007 / CBS 513.65 / DSM 816 / NCTC 3887 / NRRL 1 / QM 1276 / 107).